The sequence spans 195 residues: Imidazoleglycerol-phosphate dehydratase (195 aa).

Belongs to the imidazoleglycerol-phosphate dehydratase family.

The protein localises to the cytoplasm. The catalysed reaction is D-erythro-1-(imidazol-4-yl)glycerol 3-phosphate = 3-(imidazol-4-yl)-2-oxopropyl phosphate + H2O. It functions in the pathway amino-acid biosynthesis; L-histidine biosynthesis; L-histidine from 5-phospho-alpha-D-ribose 1-diphosphate: step 6/9. The chain is Imidazoleglycerol-phosphate dehydratase from Burkholderia cenocepacia (strain HI2424).